The following is a 141-amino-acid chain: Nucleoside diphosphate kinase (141 aa).

6 residues coordinate ATP: lysine 9, phenylalanine 57, arginine 85, threonine 91, arginine 102, and asparagine 112. Catalysis depends on histidine 115, which acts as the Pros-phosphohistidine intermediate.

The protein belongs to the NDK family. Homotetramer. Requires Mg(2+) as cofactor.

The protein localises to the cytoplasm. It catalyses the reaction a 2'-deoxyribonucleoside 5'-diphosphate + ATP = a 2'-deoxyribonucleoside 5'-triphosphate + ADP. The catalysed reaction is a ribonucleoside 5'-diphosphate + ATP = a ribonucleoside 5'-triphosphate + ADP. In terms of biological role, major role in the synthesis of nucleoside triphosphates other than ATP. The ATP gamma phosphate is transferred to the NDP beta phosphate via a ping-pong mechanism, using a phosphorylated active-site intermediate. The protein is Nucleoside diphosphate kinase of Chlamydia trachomatis serovar D (strain ATCC VR-885 / DSM 19411 / UW-3/Cx).